The sequence spans 493 residues: Acetylcholine receptor subunit epsilon (493 aa).

An N-terminal signal peptide occupies residues 1-20 (MARAPLGVLLLLGLLGRGVG). Residues 21 to 239 (KNEELRLYHH…VIYSLIIRRK (219 aa)) are Extracellular-facing. Residues N86 and N161 are each glycosylated (N-linked (GlcNAc...) asparagine). A disulfide bridge connects residues C148 and C162. A helical membrane pass occupies residues 240 to 264 (PLFYVINIIVPCVLISGLVLLAYFL). Residues 265–272 (PAQAGGQK) are Cytoplasmic-facing. The chain crosses the membrane as a helical span at residues 273 to 291 (CTVSINVLLAQTVFLFLIA). Residues 292 to 306 (QKIPETSLSVPLLGR) are Extracellular-facing. A helical membrane pass occupies residues 307–328 (FLIFVMVVATLIVMNCVIVLNV). Over 329-456 (SQRTPTTHAM…WVRMGNALDN (128 aa)) the chain is Cytoplasmic. Residues 457 to 480 (ICFWAALVLFSVGSSLIFLGAYFN) form a helical membrane-spanning segment. Residues 481-493 (RVPDLPYAPCIQP) are Extracellular-facing.

This sequence belongs to the ligand-gated ion channel (TC 1.A.9) family. Acetylcholine receptor (TC 1.A.9.1) subfamily. Epsilon/CHRNE sub-subfamily. Pentamer of two alpha chains, and one each of the beta, delta, and gamma (in immature muscle) or epsilon (in mature muscle) chains. The muscle heteropentamer composed of alpha-1, beta-1, delta, epsilon subunits interacts with the alpha-conotoxin ImII.

The protein resides in the postsynaptic cell membrane. The protein localises to the cell membrane. It carries out the reaction K(+)(in) = K(+)(out). It catalyses the reaction Na(+)(in) = Na(+)(out). In terms of biological role, after binding acetylcholine, the AChR responds by an extensive change in conformation that affects all subunits and leads to opening of an ion-conducting channel across the plasma membrane. In Homo sapiens (Human), this protein is Acetylcholine receptor subunit epsilon.